The following is a 349-amino-acid chain: Arginine kinase (349 aa).

Positions 3–85 (DLAELWEKVS…LGPVILDYHK (83 aa)) constitute a Phosphagen kinase N-terminal domain. 58-62 (GVGVY) contacts substrate. The Phosphagen kinase C-terminal domain occupies 113 to 349 (WIVSTRVRVG…EEIIKLEKAA (237 aa)). ATP contacts are provided by residues 116–120 (STRVR) and H179. Residue E219 participates in substrate binding. R223 lines the ATP pocket. Residue C265 coordinates substrate. ATP is bound by residues 274 to 278 (RASVH) and 302 to 307 (RGIHGE). E307 is a binding site for substrate.

The protein belongs to the ATP:guanido phosphotransferase family.

The enzyme catalyses L-arginine + ATP = N(omega)-phospho-L-arginine + ADP + H(+). The sequence is that of Arginine kinase from Liolophura japonica (Chiton).